Here is a 122-residue protein sequence, read N- to C-terminus: MARIAGINVPVKKCVPFALTYIHGIGITTANIICRSCKIDERKRVLELQDEDIEKISSFIRQKYVIEGELRKKVAMDIKSLMEIGCYRGLRHRKGLPVRGQRTHTNAKTRKGRSKLPIAGKK.

The tract at residues 97-122 (PVRGQRTHTNAKTRKGRSKLPIAGKK) is disordered.

It belongs to the universal ribosomal protein uS13 family. Part of the 30S ribosomal subunit. Forms a loose heterodimer with protein S19. Forms two bridges to the 50S subunit in the 70S ribosome.

In terms of biological role, located at the top of the head of the 30S subunit, it contacts several helices of the 16S rRNA. In the 70S ribosome it contacts the 23S rRNA (bridge B1a) and protein L5 of the 50S subunit (bridge B1b), connecting the 2 subunits; these bridges are implicated in subunit movement. Contacts the tRNAs in the A and P-sites. The protein is Small ribosomal subunit protein uS13 of Wolbachia pipientis subsp. Culex pipiens (strain wPip).